Consider the following 240-residue polypeptide: 4-hydroxy-tetrahydrodipicolinate reductase (240 aa).

Residues 79 to 81 and 103 to 106 each bind NAD(+); these read ATT and SANM. His135 (proton donor/acceptor) is an active-site residue. His136 lines the (S)-2,3,4,5-tetrahydrodipicolinate pocket. Catalysis depends on Lys139, which acts as the Proton donor. 145-146 lines the (S)-2,3,4,5-tetrahydrodipicolinate pocket; sequence GT.

Belongs to the DapB family.

It is found in the cytoplasm. It carries out the reaction (S)-2,3,4,5-tetrahydrodipicolinate + NAD(+) + H2O = (2S,4S)-4-hydroxy-2,3,4,5-tetrahydrodipicolinate + NADH + H(+). It catalyses the reaction (S)-2,3,4,5-tetrahydrodipicolinate + NADP(+) + H2O = (2S,4S)-4-hydroxy-2,3,4,5-tetrahydrodipicolinate + NADPH + H(+). Its pathway is amino-acid biosynthesis; L-lysine biosynthesis via DAP pathway; (S)-tetrahydrodipicolinate from L-aspartate: step 4/4. Its function is as follows. Catalyzes the conversion of 4-hydroxy-tetrahydrodipicolinate (HTPA) to tetrahydrodipicolinate. The polypeptide is 4-hydroxy-tetrahydrodipicolinate reductase (Staphylococcus saprophyticus subsp. saprophyticus (strain ATCC 15305 / DSM 20229 / NCIMB 8711 / NCTC 7292 / S-41)).